Reading from the N-terminus, the 535-residue chain is Inositol 1,4,5-trisphosphate receptor-interacting protein-like 2 (535 aa).

The signal sequence occupies residues 1–38; that stretch reads MSVHYTLNLRVFWPLVTGLCTALVCLYHVLRGSGGARA. Over 39–43 the chain is Extracellular; the sequence is EPADG. Residues 44 to 64 traverse the membrane as a helical segment; that stretch reads VDGGFPLLKVAVLLLLSYVLL. Over 65–535 the chain is Cytoplasmic; the sequence is RCRHAVRQRF…RTQGFLEGEP (471 aa). Position 139 is a phosphoserine (Ser-139).

It belongs to the ITPRIP family.

The protein resides in the membrane. The polypeptide is Inositol 1,4,5-trisphosphate receptor-interacting protein-like 2 (ITPRIPL2) (Homo sapiens (Human)).